A 118-amino-acid chain; its full sequence is Ribosome-binding factor A (118 aa).

This sequence belongs to the RbfA family. In terms of assembly, monomer. Binds 30S ribosomal subunits, but not 50S ribosomal subunits or 70S ribosomes.

The protein resides in the cytoplasm. One of several proteins that assist in the late maturation steps of the functional core of the 30S ribosomal subunit. Associates with free 30S ribosomal subunits (but not with 30S subunits that are part of 70S ribosomes or polysomes). Required for efficient processing of 16S rRNA. May interact with the 5'-terminal helix region of 16S rRNA. The protein is Ribosome-binding factor A of Bacillus anthracis (strain A0248).